We begin with the raw amino-acid sequence, 130 residues long: Glycoprotein hormone beta-5 (130 aa).

Residues 1–24 form the signal peptide; it reads MKLVYLVLGAVALLLLGGPDSVLS. Cystine bridges form between Cys36/Cys84, Cys50/Cys99, Cys60/Cys115, Cys64/Cys117, and Cys120/Cys127. Asn87 carries an N-linked (GlcNAc...) asparagine glycan.

Belongs to the glycoprotein hormones subunit beta family. In terms of assembly, heterodimer with GPHA2; this heterodimer interacts with thyroid-stimulating hormone receptor (TSHR), and hence stimulates cAMP production. N-glycosylated. As to expression, expressed in the anterior lobe of pituitary.

It localises to the secreted. Functionally, functions as a heterodimeric glycoprotein hormone with GPHA2 able to bind and activate the thyroid-stimulating hormone receptor (TSHR), leading to increased cAMP production. Plays a central role in controlling thyroid cell metabolism. The chain is Glycoprotein hormone beta-5 (Gphb5) from Mus musculus (Mouse).